The sequence spans 134 residues: Cytochrome b (134 aa).

3 helical membrane-spanning segments follow: residues 33–53 (FGSL…FLAI), 77–98 (WLLR…YLHV), and 113–133 (WNIG…GYVL). Residues His-83 and His-97 each contribute to the heme b site.

It belongs to the cytochrome b family. As to quaternary structure, the cytochrome bc1 complex contains 11 subunits: 3 respiratory subunits (MT-CYB, CYC1 and UQCRFS1), 2 core proteins (UQCRC1 and UQCRC2) and 6 low-molecular weight proteins (UQCRH/QCR6, UQCRB/QCR7, UQCRQ/QCR8, UQCR10/QCR9, UQCR11/QCR10 and a cleavage product of UQCRFS1). This cytochrome bc1 complex then forms a dimer. Heme b is required as a cofactor.

The protein localises to the mitochondrion inner membrane. Component of the ubiquinol-cytochrome c reductase complex (complex III or cytochrome b-c1 complex) that is part of the mitochondrial respiratory chain. The b-c1 complex mediates electron transfer from ubiquinol to cytochrome c. Contributes to the generation of a proton gradient across the mitochondrial membrane that is then used for ATP synthesis. The polypeptide is Cytochrome b (MT-CYB) (Platyrrhinus helleri (Heller's broad-nosed bat)).